The following is a 337-amino-acid chain: Sorting nexin-15 (337 aa).

Residues 1 to 130 (MSRQAKDDFL…EFFRGGEVTR (130 aa)) enclose the PX domain. Residues R51, S53, R87, and R96 each contribute to the a 1,2-diacyl-sn-glycero-3-phospho-(1D-myo-inositol-3-phosphate) site. An Omega-N-methylarginine modification is found at R105. The tract at residues 133–156 (EVSRDLRILPPPLIPTPPPDEARL) is disordered. Over residues 141–151 (LPPPLIPTPPP) the composition is skewed to pro residues. S201 and S227 each carry phosphoserine. Residues 244 to 270 (LDQEPWEPGGQEEEEAEDGEPAPAYLG) are disordered. Positions 253–263 (GQEEEEAEDGE) are enriched in acidic residues. The region spanning 265-337 (APAYLGQATE…RAEMLHTHLP (73 aa)) is the MIT domain.

Belongs to the sorting nexin family. In terms of assembly, homodimer. Interacts with SNX1, SNX2 and SNX4.

It localises to the cytoplasm. Its subcellular location is the membrane. The protein localises to the cytoplasmic vesicle membrane. May be involved in several stages of intracellular trafficking. Overexpression of SNX15 disrupts the normal trafficking of proteins from the plasma membrane to recycling endosomes or the TGN. This Mus musculus (Mouse) protein is Sorting nexin-15 (Snx15).